Consider the following 356-residue polypeptide: Phenylalanine--tRNA ligase alpha subunit (356 aa).

Position 260 (E260) interacts with Mg(2+).

It belongs to the class-II aminoacyl-tRNA synthetase family. Phe-tRNA synthetase alpha subunit type 1 subfamily. As to quaternary structure, tetramer of two alpha and two beta subunits. The cofactor is Mg(2+).

The protein localises to the cytoplasm. The catalysed reaction is tRNA(Phe) + L-phenylalanine + ATP = L-phenylalanyl-tRNA(Phe) + AMP + diphosphate + H(+). This Gluconobacter oxydans (strain 621H) (Gluconobacter suboxydans) protein is Phenylalanine--tRNA ligase alpha subunit.